The primary structure comprises 269 residues: MNLNNLENIRYNEIKEFSDKIKKEFTFSQEKQVMDIIEKLNKDPRKNVIKLGQALEKFLNKYEEELKRTNNMYNFDRRYGNNYLIAGVDEVGRGPLAGPIVAAAVVLDLNVEEMQRIFNIKDSKKLSEKKREELDIIIREKAISYNIALVDNKTIDERGISWSNNEVLKRAVEGLKVKPDLVLSDGYAVKNLNIRNEFIIKGDSKSISIASSSIIAKVYRDNMMKEYSKELNMYGFNHNAGYGTEEHVQAIKKYGPSKIHRMSFLTNIL.

One can recognise an RNase H type-2 domain in the interval 83–269 (YLIAGVDEVG…HRMSFLTNIL (187 aa)). Residues D89, E90, and D185 each contribute to the a divalent metal cation site.

Belongs to the RNase HII family. Mn(2+) serves as cofactor. It depends on Mg(2+) as a cofactor.

The protein resides in the cytoplasm. It catalyses the reaction Endonucleolytic cleavage to 5'-phosphomonoester.. Functionally, endonuclease that specifically degrades the RNA of RNA-DNA hybrids. In Clostridium botulinum (strain Loch Maree / Type A3), this protein is Ribonuclease HII.